The chain runs to 181 residues: MLSVGQWPNKPFAWLLLFLGCSGLLGAALYFQMVLNLEPCVKCVYQRMAVIGIGLSAIVGLFGSGLWLTRWAALIGWLYSSYQGLLIAYDHWDLQTSKNAFFAVCESAPNFPDWAPMHEWMPGLFAAPGLCGDIDWQWLGLGMPGWMTVIFAGLLLIGIIVTICHIISSFTKKDGLVLYHK.

Topologically, residues 1–13 are cytoplasmic; it reads MLSVGQWPNKPFA. The helical transmembrane segment at 14-30 threads the bilayer; the sequence is WLLLFLGCSGLLGAALY. The Periplasmic segment spans residues 31–48; sequence FQMVLNLEPCVKCVYQRM. A disulfide bridge links Cys40 with Cys43. The chain crosses the membrane as a helical span at residues 49–64; that stretch reads AVIGIGLSAIVGLFGS. Residues 65 to 71 are Cytoplasmic-facing; sequence GLWLTRW. A helical membrane pass occupies residues 72-89; that stretch reads AALIGWLYSSYQGLLIAY. Over 90–145 the chain is Periplasmic; it reads DHWDLQTSKNAFFAVCESAPNFPDWAPMHEWMPGLFAAPGLCGDIDWQWLGLGMPG. Cysteines 105 and 131 form a disulfide. A helical transmembrane segment spans residues 146 to 164; sequence WMTVIFAGLLLIGIIVTIC. Topologically, residues 165-181 are cytoplasmic; sequence HIISSFTKKDGLVLYHK.

The protein belongs to the DsbB family.

The protein localises to the cell inner membrane. Its function is as follows. Required for disulfide bond formation in some periplasmic proteins. Acts by oxidizing the DsbA protein. The chain is Disulfide bond formation protein B from Idiomarina loihiensis (strain ATCC BAA-735 / DSM 15497 / L2-TR).